Here is a 211-residue protein sequence, read N- to C-terminus: PITH domain-containing protein 1 (211 aa).

One can recognise a PITH domain in the interval 20-192 (EPPEQRGLAY…EVTICNYEAS (173 aa)). Phosphotyrosine is present on tyrosine 189.

It belongs to the PITHD1 family. In terms of tissue distribution, down-regulated in primary acute myeloid leukemia (AML) patients.

Its subcellular location is the cytoplasm. In terms of biological role, promotes megakaryocyte differentiation by up-regulating RUNX1 expression. Regulates RUNX1 expression by activating the proximal promoter of the RUNX1 gene and by enhancing the translation activity of an internal ribosome entry site (IRES) element in the RUNX1 gene. This chain is PITH domain-containing protein 1 (PITHD1), found in Homo sapiens (Human).